Consider the following 326-residue polypeptide: Adenosine receptor A1 (326 aa).

Topologically, residues 1 to 10 (MPPSISAFQA) are extracellular. The helical transmembrane segment at 11–33 (AYIGIEVLIALVSVPGNVLVIWA) threads the bilayer. The Cytoplasmic segment spans residues 34-46 (VKVNQALRDATFC). A helical membrane pass occupies residues 47–69 (FIVSLAVADVAVGALVIPLAILI). Residues 70-80 (NIGPRTYFHTC) lie on the Extracellular side of the membrane. The cysteines at positions 80 and 169 are disulfide-linked. Residues 81–102 (LKVACPVLILTQSSILALLAIA) form a helical membrane-spanning segment. Residues 103 to 123 (VDRYLRVKIPLRYKTVVTPRR) lie on the Cytoplasmic side of the membrane. Residues 124–146 (AVVAITGCWILSFVVGLTPMFGW) form a helical membrane-spanning segment. The Extracellular segment spans residues 147 to 176 (NNLSAVERDWLANGSVGEPVIECQFEKVIS). N-linked (GlcNAc...) asparagine glycosylation is found at Asn-148 and Asn-159. The chain crosses the membrane as a helical span at residues 177–201 (MEYMVYFNFFVWVLPPLLLMVLIYM). Residues 202–235 (EVFYLIRKQLNKKVSASSGDPQKYYGKELKIAKS) are Cytoplasmic-facing. The chain crosses the membrane as a helical span at residues 236-259 (LALILFLFALSWLPLHILNCITLF). Over 260–267 (CPSCHMPR) the chain is Extracellular. A helical transmembrane segment spans residues 268–292 (ILIYIAIFLSHGNSAMNPIVYAFRI). Residues 293 to 326 (QKFRVTFLKIWNDHFRCQPAPPVDEDAPAERPDD) lie on the Cytoplasmic side of the membrane. A lipid anchor (S-palmitoyl cysteine) is attached at Cys-309.

This sequence belongs to the G-protein coupled receptor 1 family.

It is found in the cell membrane. Its function is as follows. Receptor for adenosine. The activity of this receptor is mediated by G proteins which inhibit adenylyl cyclase. This chain is Adenosine receptor A1 (ADORA1), found in Bos taurus (Bovine).